Here is a 485-residue protein sequence, read N- to C-terminus: NADH-quinone oxidoreductase subunit N (485 aa).

The next 14 helical transmembrane spans lie at 8-28, 35-55, 71-91, 105-125, 127-147, 159-179, 203-223, 235-255, 271-291, 297-317, 326-346, 373-393, 408-430, and 455-475; these read LIALLPLLIVGLTVVVVMLSI, FLNATLSVIGLNAALVSLWFV, GFAMLYTGLVLLASLATCTFA, FYLLVLIAALGGILLANANHL, SLFLGIELISLPLFGLVGYAF, YTILSAAASSFLLFGMALVYA, LLAGFGLMIVGLGFKLSLVPF, PAPVSTFLATASKIAIFGVVM, VVLAIIAFASIIFGNLMALSQ, LLGYSSISHLGYLLVALIALQ, VGVYLVGYLFSSLGAFGVVSL, AAVMTVMMLSLAGIPMTLGFI, WWLVGAVVVGSAIGLYYYLRVAV, and IVVLISALLVLVLGVWPQPLI.

The protein belongs to the complex I subunit 2 family. NDH-1 is composed of 13 different subunits. Subunits NuoA, H, J, K, L, M, N constitute the membrane sector of the complex.

Its subcellular location is the cell inner membrane. The enzyme catalyses a quinone + NADH + 5 H(+)(in) = a quinol + NAD(+) + 4 H(+)(out). In terms of biological role, NDH-1 shuttles electrons from NADH, via FMN and iron-sulfur (Fe-S) centers, to quinones in the respiratory chain. The immediate electron acceptor for the enzyme in this species is believed to be ubiquinone. Couples the redox reaction to proton translocation (for every two electrons transferred, four hydrogen ions are translocated across the cytoplasmic membrane), and thus conserves the redox energy in a proton gradient. In Escherichia coli O81 (strain ED1a), this protein is NADH-quinone oxidoreductase subunit N.